An 810-amino-acid polypeptide reads, in one-letter code: Phospholipase D alpha 2 (810 aa).

Residues 1–126 (MEECLLHGRL…LHGEEVDRWV (126 aa)) form the C2 domain. Asp-187 provides a ligand contact to Ca(2+). Residues 327-365 (TMFTHHQKIVVVDSEMPSGGSRSRRIVSFVGGLDLCDGR) form the PLD phosphodiesterase 1 domain. Residues His-332, Lys-334, and Asp-339 contribute to the active site. His-332 is a binding site for a 1,2-diacyl-sn-glycero-3-phosphate. Ca(2+) is bound by residues His-371 and His-405. Residues Gln-521 and His-661 each coordinate a 1,2-diacyl-sn-glycero-3-phosphate. The PLD phosphodiesterase 2 domain occupies 656-683 (FMIYVHTKMMIVDDEYIIIGSANINQRS). Catalysis depends on residues His-661, Lys-663, and Asp-668. Position 722 (Glu-722) interacts with Ca(2+).

Belongs to the phospholipase D family. C2-PLD subfamily. Ca(2+) serves as cofactor. As to expression, highly expressed in roots, stems and flowers, moderately in leaves, seedlings and siliques. Not detected in dry seeds.

It is found in the cytoplasm. Its subcellular location is the membrane. The protein localises to the vacuole. The protein resides in the cytoplasmic vesicle. It localises to the clathrin-coated vesicle. The enzyme catalyses a 1,2-diacyl-sn-glycero-3-phosphocholine + H2O = a 1,2-diacyl-sn-glycero-3-phosphate + choline + H(+). Functionally, hydrolyzes glycerol-phospholipids at the terminal phosphodiesteric bond to generate phosphatidic acids (PA). Plays an important role in various cellular processes, including phytohormone action and response to stress, characterized by acidification of the cell. The protein is Phospholipase D alpha 2 of Arabidopsis thaliana (Mouse-ear cress).